The following is a 172-amino-acid chain: Glutamyl-tRNA(Gln) amidotransferase subunit C-4, mitochondrial (172 aa).

The transit peptide at 1–23 (MIRIPFHLRQTPGRTLHSLVRSF) directs the protein to the mitochondrion. Residues 51–73 (PSKVPQRPHKSTIDGQSTPTRIP) form a disordered region.

Belongs to the GatC family. In terms of assembly, subunit of the heterotrimeric GatCAB amidotransferase (AdT) complex, composed of A, B and C subunits.

The protein resides in the mitochondrion. The enzyme catalyses L-glutamyl-tRNA(Gln) + L-glutamine + ATP + H2O = L-glutaminyl-tRNA(Gln) + L-glutamate + ADP + phosphate + H(+). Functionally, allows the formation of correctly charged Gln-tRNA(Gln) through the transamidation of misacylated Glu-tRNA(Gln) in the mitochondria. The reaction takes place in the presence of glutamine and ATP through an activated gamma-phospho-Glu-tRNA(Gln). In Culex quinquefasciatus (Southern house mosquito), this protein is Glutamyl-tRNA(Gln) amidotransferase subunit C-4, mitochondrial.